Consider the following 827-residue polypeptide: Periplasmic nitrate reductase (827 aa).

The segment at residues 1 to 32 is a signal peptide (tat-type signal); sequence MELNRRDFMKANAAMAAAAAAGMTIPVKNVYA. The 57-residue stretch at 37–93 folds into the 4Fe-4S Mo/W bis-MGD-type domain; it reads IRWDKAPCRFCGTGCSVLVGTKDGRVVATQGDPDAEVNRGLNCIKGYFLSKIMYGAD. Cys-44, Cys-47, Cys-51, and Cys-79 together coordinate [4Fe-4S] cluster. Residues Lys-81, Gln-148, Asn-173, Cys-177, 210 to 217, 241 to 245, Met-371, Gln-375, Asn-481, 507 to 508, Lys-530, Asp-557, and 717 to 726 contribute to the Mo-bis(molybdopterin guanine dinucleotide) site; these read WGSNMAEM, STFEH, SD, and TGRVLEHWHT. Phe-793 provides a ligand contact to substrate. Asn-801 and Lys-818 together coordinate Mo-bis(molybdopterin guanine dinucleotide).

Belongs to the prokaryotic molybdopterin-containing oxidoreductase family. NasA/NapA/NarB subfamily. Component of the periplasmic nitrate reductase NapAB complex composed of NapA and NapB. The cofactor is [4Fe-4S] cluster. Mo-bis(molybdopterin guanine dinucleotide) is required as a cofactor. Predicted to be exported by the Tat system. The position of the signal peptide cleavage has not been experimentally proven.

The protein localises to the periplasm. It carries out the reaction 2 Fe(II)-[cytochrome] + nitrate + 2 H(+) = 2 Fe(III)-[cytochrome] + nitrite + H2O. Catalytic subunit of the periplasmic nitrate reductase complex NapAB. Receives electrons from NapB and catalyzes the reduction of nitrate to nitrite. This is Periplasmic nitrate reductase from Actinobacillus pleuropneumoniae serotype 7 (strain AP76).